A 270-amino-acid chain; its full sequence is Non-structural maintenance of chromosomes element 1 homolog (270 aa).

The RING-type; atypical zinc-finger motif lies at 185–226; the sequence is CNVCHKIAIQCQLCENCGIPLHLQCAGIYFRGIANPLCPNCK. Positions 236 to 270 are disordered; it reads LSQVSSQGPSHSQAAPVRGRNQRSRNISTVARTSR. 2 stretches are compositionally biased toward polar residues: residues 237 to 248 and 259 to 270; these read SQVSSQGPSHSQ and SRNISTVARTSR.

It belongs to the NSE1 family. As to quaternary structure, component of the SMC5-SMC6 complex.

Its subcellular location is the nucleus. The protein localises to the chromosome. It is found in the telomere. It carries out the reaction S-ubiquitinyl-[E2 ubiquitin-conjugating enzyme]-L-cysteine + [acceptor protein]-L-lysine = [E2 ubiquitin-conjugating enzyme]-L-cysteine + N(6)-ubiquitinyl-[acceptor protein]-L-lysine.. Functionally, RING-type zinc finger-containing E3 ubiquitin ligase that assembles with melanoma antigen protein (MAGE) to catalyze the direct transfer of ubiquitin from E2 ubiquitin-conjugating enzyme to a specific substrate. Within MAGE-RING ubiquitin ligase complex, MAGE stimulates and specifies ubiquitin ligase activity likely through recruitment and/or stabilization of the E2 ubiquitin-conjugating enzyme at the E3:substrate complex. Involved in maintenance of genome integrity, DNA damage response and DNA repair. The chain is Non-structural maintenance of chromosomes element 1 homolog (nsmce1) from Xenopus tropicalis (Western clawed frog).